The primary structure comprises 574 residues: Proline--tRNA ligase (574 aa).

Belongs to the class-II aminoacyl-tRNA synthetase family. ProS type 1 subfamily. Homodimer.

The protein resides in the cytoplasm. It carries out the reaction tRNA(Pro) + L-proline + ATP = L-prolyl-tRNA(Pro) + AMP + diphosphate. Functionally, catalyzes the attachment of proline to tRNA(Pro) in a two-step reaction: proline is first activated by ATP to form Pro-AMP and then transferred to the acceptor end of tRNA(Pro). As ProRS can inadvertently accommodate and process non-cognate amino acids such as alanine and cysteine, to avoid such errors it has two additional distinct editing activities against alanine. One activity is designated as 'pretransfer' editing and involves the tRNA(Pro)-independent hydrolysis of activated Ala-AMP. The other activity is designated 'posttransfer' editing and involves deacylation of mischarged Ala-tRNA(Pro). The misacylated Cys-tRNA(Pro) is not edited by ProRS. This is Proline--tRNA ligase from Desulfovibrio desulfuricans (strain ATCC 27774 / DSM 6949 / MB).